The sequence spans 425 residues: Acyl-lipid (8-3)-desaturase (425 aa).

The disordered stretch occupies residues 1–25; the sequence is MPPRDSYSYAAPPSAQLHEVDTPQE. A Cytochrome b5 heme-binding domain is found at 18–93; it reads HEVDTPQEHD…SRPVHKGYSP (76 aa). Residues His-47 and His-69 each contribute to the heme site. A helical membrane pass occupies residues 134–154; the sequence is VAGAALIWHGYTFAGIAMLGV. The Histidine box-1 motif lies at 164 to 168; sequence HEGGH. The chain crosses the membrane as a helical span at residues 175–197; sequence IAFDRAIQVACYGLGCGMSGAWW. The short motif at 201–206 is the Histidine box-2 element; it reads HNKHHA. A run of 2 helical transmembrane segments spans residues 241–261 and 297–317; these read WLSM…ALGW and GAGY…MYIF. The Histidine box-3 motif lies at 365–369; that stretch reads QIEHH.

It belongs to the fatty acid desaturase type 1 family. It depends on Fe(2+) as a cofactor.

Its subcellular location is the membrane. The enzyme catalyses an (8Z,11Z,14Z)-icosatrienoyl-containing glycerolipid + 2 Fe(II)-[cytochrome b5] + O2 + 2 H(+) = (5Z,8Z,11Z,14Z)-eicosatetraenoyl-containing glycerolipid + 2 Fe(III)-[cytochrome b5] + 2 H2O. It catalyses the reaction an (8Z,11Z,14Z,17Z)-eicosatetraenoyl-containing glycerolipid + 2 Fe(II)-[cytochrome b5] + O2 + 2 H(+) = a (5Z,8Z,11Z,14Z,17Z)-eicosapentaenoyl-containing glycerolipid + 2 Fe(III)-[cytochrome b5] + 2 H2O. Fatty acid desaturase that introduces a cis double bond at the 5-position in 20-carbon polyunsaturated fatty acids incorporated in a glycerolipid that contain a Delta(8) double bond. This chain is Acyl-lipid (8-3)-desaturase, found in Rebecca salina (Marine microalga).